A 159-amino-acid polypeptide reads, in one-letter code: Putative 4-hydroxy-4-methyl-2-oxoglutarate aldolase (159 aa).

Substrate-binding positions include 74 to 77 (GDNL) and R96. A divalent metal cation is bound at residue D97.

The protein belongs to the class II aldolase/RraA-like family. Homotrimer. Requires a divalent metal cation as cofactor.

It catalyses the reaction 4-hydroxy-4-methyl-2-oxoglutarate = 2 pyruvate. The catalysed reaction is oxaloacetate + H(+) = pyruvate + CO2. Functionally, catalyzes the aldol cleavage of 4-hydroxy-4-methyl-2-oxoglutarate (HMG) into 2 molecules of pyruvate. Also contains a secondary oxaloacetate (OAA) decarboxylase activity due to the common pyruvate enolate transition state formed following C-C bond cleavage in the retro-aldol and decarboxylation reactions. This chain is Putative 4-hydroxy-4-methyl-2-oxoglutarate aldolase, found in Bacillus cereus (strain ZK / E33L).